Reading from the N-terminus, the 757-residue chain is NAD(P)H-quinone oxidoreductase subunit 5, chloroplastic (757 aa).

The next 17 helical transmembrane spans lie at 9–29 (WIIP…LLLV), 40–60 (WAFP…DLSV), 89–109 (IDPL…MVLI), 122–139 (LRFF…LGLV), 147–167 (IYIF…FWFT), 185–205 (GDFG…SFEF), 219–239 (NGVN…GAVA), 258–278 (TPIS…FLVA), 280–300 (LLPL…IGVI), 327–347 (LGYI…FHLI), 354–374 (ALLF…VGYS), 396–416 (MTFL…CFWS), 425–445 (WLYS…TAFY), 544–564 (LLPL…GIPF), 607–627 (SIAY…YLFF), 692–712 (GIMN…KYLG), and 718–738 (SYLF…IFFF).

It belongs to the complex I subunit 5 family. NDH is composed of at least 16 different subunits, 5 of which are encoded in the nucleus.

It is found in the plastid. The protein localises to the chloroplast thylakoid membrane. It catalyses the reaction a plastoquinone + NADH + (n+1) H(+)(in) = a plastoquinol + NAD(+) + n H(+)(out). It carries out the reaction a plastoquinone + NADPH + (n+1) H(+)(in) = a plastoquinol + NADP(+) + n H(+)(out). In terms of biological role, NDH shuttles electrons from NAD(P)H:plastoquinone, via FMN and iron-sulfur (Fe-S) centers, to quinones in the photosynthetic chain and possibly in a chloroplast respiratory chain. The immediate electron acceptor for the enzyme in this species is believed to be plastoquinone. Couples the redox reaction to proton translocation, and thus conserves the redox energy in a proton gradient. In Drimys granadensis, this protein is NAD(P)H-quinone oxidoreductase subunit 5, chloroplastic (ndhF).